Here is a 143-residue protein sequence, read N- to C-terminus: MSTKKVYSFLSQAFIFSAIMLISNIIATHLPIPMPSSVIGLVILFSLLCLKVIKLEQVESLGTALTGIIGFLFVPSGISVINSLGVMGQYFVQILTVIVVATVILLAVTGLFAQFILGKDEKETEDTKELKVVNKGRKHGKVA.

4 consecutive transmembrane segments (helical) span residues 6–26 (VYSF…SNII), 30–50 (LPIP…LLCL), 61–81 (LGTA…ISVI), and 97–117 (VIVV…QFIL).

Belongs to the CidA/LrgA family. LrgA subfamily.

The protein localises to the cell membrane. Its function is as follows. Inhibits the expression or activity of extracellular murein hydrolases by interacting, possibly with LrgB, with the holin-like protein CidA. The LrgAB and CidA proteins may affect the proton motive force of the membrane. May be involved in programmed cell death (PCD), possibly triggering PCD in response to antibiotics and environmental stresses. The protein is Antiholin-like protein LrgA of Bacillus anthracis (strain A0248).